The sequence spans 113 residues: Histidine triad nucleotide-binding protein (113 aa).

Zn(2+) contacts are provided by Cys-5 and Cys-8. Positions 6–113 (IFCKIAQKQI…GGKKLAWDKL (108 aa)) constitute an HIT domain. An AMP-binding site is contributed by Asp-31. His-47 is a binding site for Zn(2+). Asn-86, Gly-92, and Thr-94 together coordinate AMP. Zn(2+) is bound at residue His-97. The Histidine triad motif motif lies at 97-101 (HIHFH). Positions 99 and 101 each coordinate AMP. The active-site Tele-AMP-histidine intermediate is the His-99.

It belongs to the HINT family.

The protein resides in the nucleus. The protein localises to the cytoplasm. The enzyme catalyses adenosine 5'-phosphoramidate + H2O = AMP + NH4(+). Functionally, hydrolyzes purine nucleotide phosphoramidates with a single phosphate group, including adenosine 5'monophosphoramidate (AMP-NH2), adenosine 5'monophosphomorpholidate (AMP-morpholidate) and guanosine 5'monophosphomorpholidate (GMP-morpholidate). Hydrolyzes lysyl-AMP (AMP-N-epsilon-(N-alpha-acetyl lysine methyl ester)) generated by lysine tRNA ligase, as well as Met-AMP, His-AMP and Asp-AMP, lysyl-GMP (GMP-N-epsilon-(N-alpha-acetyl lysine methyl ester)) and AMP-N-alanine methyl ester. May also function as scaffolding protein that mediates protein-protein interactions. The chain is Histidine triad nucleotide-binding protein from Entamoeba histolytica (strain ATCC 30459 / HM-1:IMSS / ABRM).